A 169-amino-acid polypeptide reads, in one-letter code: Ribosome-binding factor A (169 aa).

The disordered stretch occupies residues 124–169 (AGAKHAGDADPYKSDIPEDVEIDEDDFDEEDEDLIDDEELDEDGNK). The segment covering 128–139 (HAGDADPYKSDI) has biased composition (basic and acidic residues). Residues 140-169 (PEDVEIDEDDFDEEDEDLIDDEELDEDGNK) show a composition bias toward acidic residues.

The protein belongs to the RbfA family. In terms of assembly, monomer. Binds 30S ribosomal subunits, but not 50S ribosomal subunits or 70S ribosomes.

It localises to the cytoplasm. In terms of biological role, one of several proteins that assist in the late maturation steps of the functional core of the 30S ribosomal subunit. Associates with free 30S ribosomal subunits (but not with 30S subunits that are part of 70S ribosomes or polysomes). Required for efficient processing of 16S rRNA. May interact with the 5'-terminal helix region of 16S rRNA. This is Ribosome-binding factor A from Arthrobacter sp. (strain FB24).